The following is a 130-amino-acid chain: Hypocretin neuropeptide precursor (130 aa).

The N-terminal stretch at 1–32 (MNFPSTKVPWAAVTLLLLLLLPPALLSLGVDA) is a signal peptide. Residue Gln-33 is modified to Pyrrolidone carboxylic acid. 2 disulfide bridges follow: Cys-38/Cys-44 and Cys-39/Cys-46. The residue at position 65 (Leu-65) is a Leucine amide. Residue Met-96 is modified to Methionine amide. Positions 97–130 (GRRAGAELEPHPCSGRGCPTVTTTALAPRGGSGV) are excised as a propeptide.

It belongs to the orexin family. Specific enzymatic cleavages at paired basic residues yield the different active peptides. In terms of tissue distribution, restricted to neuronal cell bodies of the dorsal and lateral hypothalamus.

The protein localises to the rough endoplasmic reticulum. The protein resides in the cytoplasmic vesicle. It is found in the synapse. Neuropeptides that play a significant role in the regulation of food intake and sleep-wakefulness, possibly by coordinating the complex behavioral and physiologic responses of these complementary homeostatic functions. A broader role in the homeostatic regulation of energy metabolism, autonomic function, hormonal balance and the regulation of body fluids, is also suggested. Functionally, binds to orexin receptors HCRTR1/OX1R and HCRTR2/OX2R with a high affinity. Stimulates food intake. Modulates pituitary luteinizing hormone secretion in an ovarian steroid-dependent manner. Its function is as follows. Binds to orexin receptor HCRTR2/OX2R only. Stimulates food intake. Modulates pituitary luteinizing hormone secretion in an ovarian steroid-dependent manner. The sequence is that of Hypocretin neuropeptide precursor (Hcrt) from Mus musculus (Mouse).